The sequence spans 20 residues: Short cationic peptide-6a (20 aa).

The residue at position 20 (Ser20) is a Serine amide.

In terms of tissue distribution, expressed by the venom gland.

Its subcellular location is the secreted. The sequence is that of Short cationic peptide-6a from Cupiennius salei (American wandering spider).